The following is a 201-amino-acid chain: Ras-related protein Rab-1B (201 aa).

Position 1 is an N-acetylmethionine (M1). GTP contacts are provided by S17, G18, V19, G20, K21, S22, C23, Y33, T34, E35, S36, S39, and T40. Residue S22 coordinates Mg(2+). A Switch 1 motif is present at residues 30-45; that stretch reads DDTYTESYISTIGVDF. T40 and D63 together coordinate Mg(2+). Residues 64–83 are switch 2 region; required for interaction with REP1/CHM; the sequence is TAGQERFRTITSSYYRGAHG. The short motif at 65-80 is the Switch 2 element; the sequence is AGQERFRTITSSYYRG. GTP-binding residues include G66, N121, K122, D124, S151, A152, and K153. The segment at 174–201 is disordered; it reads GPGAASGGERPNLKIDSTPVKPAGGGCC. Residues C200 and C201 are each lipidated (S-geranylgeranyl cysteine). C201 carries the post-translational modification Cysteine methyl ester.

Belongs to the small GTPase superfamily. Rab family. In terms of assembly, interacts with MICAL1 and MICAL2. Interacts (in GTP-bound form) with MICALCL, MICAL1 and MILCAL3. Interacts with GDI1; the interaction requires the GDP-bound state. Interacts with CHM/REP1; the interaction requires the GDP-bound form and is necessary for prenylation by GGTase II. Interacts with RabGAP TBC1D20. Interacts (in GDP-bound form) with lipid phosphatase MTMR6 (via GRAM domain); the interaction regulates MTMR6 recruitment to the endoplasmic reticulum-Golgi intermediate compartment. Interacts (in GDP-bound form) with lipid phosphatase MTMR7. Mg(2+) serves as cofactor. Post-translationally, prenylated; by GGTase II, only after interaction of the substrate with Rab escort protein 1 (REP1).

The protein resides in the cytoplasm. It is found in the membrane. Its subcellular location is the preautophagosomal structure membrane. The protein localises to the perinuclear region. The catalysed reaction is GTP + H2O = GDP + phosphate + H(+). Regulated by guanine nucleotide exchange factors (GEFs) which promote the exchange of bound GDP for free GTP. Regulated by GTPase activating proteins (GAPs) including TBC1D20 which increases the GTP hydrolysis activity. Inhibited by GDP dissociation inhibitors (GDIs). Functionally, the small GTPases Rab are key regulators of intracellular membrane trafficking, from the formation of transport vesicles to their fusion with membranes. Rabs cycle between an inactive GDP-bound form and an active GTP-bound form that is able to recruit to membranes different set of downstream effectors directly responsible for vesicle formation, movement, tethering and fusion. Plays a role in the initial events of the autophagic vacuole development which take place at specialized regions of the endoplasmic reticulum. Regulates vesicular transport between the endoplasmic reticulum and successive Golgi compartments. Required to modulate the compacted morphology of the Golgi. Promotes the recruitment of lipid phosphatase MTMR6 to the endoplasmic reticulum-Golgi intermediate compartment. The protein is Ras-related protein Rab-1B (RAB1B) of Macaca fascicularis (Crab-eating macaque).